The primary structure comprises 254 residues: Zinc import ATP-binding protein ZnuC (254 aa).

One can recognise an ABC transporter domain in the interval 5–221 (ICAADLSVSH…PAYRALFGSE (217 aa)). Residue 38–45 (GPNGSGKS) coordinates ATP. Over residues 234 to 245 (DHDHDHVAEGHR) the composition is skewed to basic and acidic residues. Residues 234–254 (DHDHDHVAEGHRHGPACAHPH) are disordered.

It belongs to the ABC transporter superfamily. Zinc importer (TC 3.A.1.15.5) family. As to quaternary structure, the complex is composed of two ATP-binding proteins (ZnuC), two transmembrane proteins (ZnuB) and a solute-binding protein (ZnuA).

Its subcellular location is the cell inner membrane. The enzyme catalyses Zn(2+)(out) + ATP(in) + H2O(in) = Zn(2+)(in) + ADP(in) + phosphate(in) + H(+)(in). Part of the ABC transporter complex ZnuABC involved in zinc import. Responsible for energy coupling to the transport system. This chain is Zinc import ATP-binding protein ZnuC, found in Paracoccus denitrificans (strain Pd 1222).